We begin with the raw amino-acid sequence, 192 residues long: Probable GTP-binding protein EngB (192 aa).

The region spanning 22-192 (QIPEIVFAGR…LLAHLAQYIR (171 aa)) is the EngB-type G domain. GTP is bound by residues 30 to 37 (GRSNVGKS), 57 to 61 (GKTRL), 75 to 78 (DLPG), 142 to 145 (TKDD), and 172 to 174 (YSS). 2 residues coordinate Mg(2+): S37 and T59.

It belongs to the TRAFAC class TrmE-Era-EngA-EngB-Septin-like GTPase superfamily. EngB GTPase family. The cofactor is Mg(2+).

Functionally, necessary for normal cell division and for the maintenance of normal septation. In Chlorobium phaeobacteroides (strain DSM 266 / SMG 266 / 2430), this protein is Probable GTP-binding protein EngB.